The chain runs to 139 residues: Thiosulfate:glutathione sulfurtransferase (139 aa).

Ser26 carries the phosphoserine modification. In terms of domain architecture, Rhodanese spans His37–Asp138. The active-site Cysteine persulfide intermediate is Cys98.

The protein resides in the mitochondrion. The catalysed reaction is thiosulfate + glutathione = S-sulfanylglutathione + sulfite + H(+). With respect to regulation, GSS(-) is a potent inhibitor of RDL1, since the presence of the sulfur dioxygenase strongly increases the RDL1 catalytic activity. In terms of biological role, thiosulfate:glutathione sulfurtransferase (TST) required to produce S-sulfanylglutathione (GSS(-)), a central intermediate in hydrogen sulfide metabolism. Provides the link between the first step in H(2)S metabolism performed by the sulfide:quinone oxidoreductase (SQOR) which catalyzes the conversion of H(2)S to thiosulfate, and the sulfur dioxygenase (SDO) which uses GSS(-) as substrate. The thermodynamic coupling of the irreversible SDO and reversible TST reactions provides a model for the physiologically relevant reaction with thiosulfate as the sulfane donor. The protein is Thiosulfate:glutathione sulfurtransferase (RDL1) of Saccharomyces cerevisiae (strain ATCC 204508 / S288c) (Baker's yeast).